The primary structure comprises 320 residues: Acetyl-coenzyme A carboxylase carboxyl transferase subunit beta (320 aa).

A CoA carboxyltransferase N-terminal domain is found at leucine 25 to aspartate 294. Residues cysteine 29, cysteine 32, cysteine 48, and cysteine 51 each coordinate Zn(2+). Residues cysteine 29–cysteine 51 form a C4-type zinc finger. The tract at residues leucine 290–serine 320 is disordered.

The protein belongs to the AccD/PCCB family. In terms of assembly, acetyl-CoA carboxylase is a heterohexamer composed of biotin carboxyl carrier protein (AccB), biotin carboxylase (AccC) and two subunits each of ACCase subunit alpha (AccA) and ACCase subunit beta (AccD). Zn(2+) serves as cofactor.

Its subcellular location is the cytoplasm. The catalysed reaction is N(6)-carboxybiotinyl-L-lysyl-[protein] + acetyl-CoA = N(6)-biotinyl-L-lysyl-[protein] + malonyl-CoA. The protein operates within lipid metabolism; malonyl-CoA biosynthesis; malonyl-CoA from acetyl-CoA: step 1/1. In terms of biological role, component of the acetyl coenzyme A carboxylase (ACC) complex. Biotin carboxylase (BC) catalyzes the carboxylation of biotin on its carrier protein (BCCP) and then the CO(2) group is transferred by the transcarboxylase to acetyl-CoA to form malonyl-CoA. This is Acetyl-coenzyme A carboxylase carboxyl transferase subunit beta from Dinoroseobacter shibae (strain DSM 16493 / NCIMB 14021 / DFL 12).